Here is a 229-residue protein sequence, read N- to C-terminus: Biosynthetic peptidoglycan transglycosylase (229 aa).

The helical transmembrane segment at 10–30 (LLLALVLVVLYQFWIFMHILW) threads the bilayer.

Belongs to the glycosyltransferase 51 family.

It localises to the cell inner membrane. The enzyme catalyses [GlcNAc-(1-&gt;4)-Mur2Ac(oyl-L-Ala-gamma-D-Glu-L-Lys-D-Ala-D-Ala)](n)-di-trans,octa-cis-undecaprenyl diphosphate + beta-D-GlcNAc-(1-&gt;4)-Mur2Ac(oyl-L-Ala-gamma-D-Glu-L-Lys-D-Ala-D-Ala)-di-trans,octa-cis-undecaprenyl diphosphate = [GlcNAc-(1-&gt;4)-Mur2Ac(oyl-L-Ala-gamma-D-Glu-L-Lys-D-Ala-D-Ala)](n+1)-di-trans,octa-cis-undecaprenyl diphosphate + di-trans,octa-cis-undecaprenyl diphosphate + H(+). It functions in the pathway cell wall biogenesis; peptidoglycan biosynthesis. Peptidoglycan polymerase that catalyzes glycan chain elongation from lipid-linked precursors. In Methylobacillus flagellatus (strain ATCC 51484 / DSM 6875 / VKM B-1610 / KT), this protein is Biosynthetic peptidoglycan transglycosylase.